A 459-amino-acid polypeptide reads, in one-letter code: Argininosuccinate lyase (459 aa).

The protein belongs to the lyase 1 family. Argininosuccinate lyase subfamily.

The protein resides in the cytoplasm. It carries out the reaction 2-(N(omega)-L-arginino)succinate = fumarate + L-arginine. It functions in the pathway amino-acid biosynthesis; L-arginine biosynthesis; L-arginine from L-ornithine and carbamoyl phosphate: step 3/3. This chain is Argininosuccinate lyase, found in Staphylococcus aureus (strain MSSA476).